Reading from the N-terminus, the 427-residue chain is Glutamate-1-semialdehyde 2,1-aminomutase (427 aa).

N6-(pyridoxal phosphate)lysine is present on Lys-265.

The protein belongs to the class-III pyridoxal-phosphate-dependent aminotransferase family. HemL subfamily. Homodimer. Pyridoxal 5'-phosphate is required as a cofactor.

Its subcellular location is the cytoplasm. The enzyme catalyses (S)-4-amino-5-oxopentanoate = 5-aminolevulinate. It participates in porphyrin-containing compound metabolism; protoporphyrin-IX biosynthesis; 5-aminolevulinate from L-glutamyl-tRNA(Glu): step 2/2. The chain is Glutamate-1-semialdehyde 2,1-aminomutase from Bordetella bronchiseptica (strain ATCC BAA-588 / NCTC 13252 / RB50) (Alcaligenes bronchisepticus).